A 419-amino-acid polypeptide reads, in one-letter code: Peroxisome biogenesis factor 10 (419 aa).

Residues 1–27 are Peroxisomal matrix-facing; sequence MPPSEEIKLRAVSPRPDFKANYLEFAN. A helical transmembrane segment spans residues 28 to 57; sequence APAIVRANQKDSYFETVLRDKLQNVIQIFK. Residue Gly58 is a topological domain, cytoplasmic. The helical transmembrane segment at 59 to 80 threads the bilayer; the sequence is QRFTHTHPEEIGVAAKALYLSL. The Peroxisomal matrix portion of the chain corresponds to 81–108; that stretch reads TTLLGTKTLGEEYVDLIYVSRDGKRIPR. The chain crosses the membrane as a helical span at residues 109–141; that stretch reads YLARAGFIFAYAILPYFLTRLFRRLKSSSTPKD. At 142 to 158 the chain is on the cytoplasmic side; sequence EVTEEKINKELPISLRI. A helical transmembrane segment spans residues 159-185; it reads EKYLSNMSYSKVLDTIMNLHIAVFYFS. The Peroxisomal matrix segment spans residues 186 to 215; sequence GQFYNISKRFFSMRYAFGHKINKERTPNGN. The chain crosses the membrane as a helical span at residues 216–235; it reads YELLGGLIVLQLVMKSLGGF. At 236-419 the chain is on the cytoplasmic side; it reads KGLIGSFTGN…RTLGYFLVVF (184 aa). Positions 298, 301, 313, 315, 318, 321, 334, and 347 each coordinate Zn(2+). The RING-type zinc finger occupies 298 to 360; that stretch reads CMLCLSYMTN…FYIPTLNKIC (63 aa).

This sequence belongs to the pex2/pex10/pex12 family. Component of the peroxisomal translocation complex, composed of at least PEX3, PEX2, PEX10 and PEX12. Interacts with PEX19.

The protein resides in the peroxisome membrane. The catalysed reaction is S-ubiquitinyl-[E2 ubiquitin-conjugating enzyme]-L-cysteine + [acceptor protein]-L-lysine = [E2 ubiquitin-conjugating enzyme]-L-cysteine + N(6)-ubiquitinyl-[acceptor protein]-L-lysine.. The protein operates within protein modification; protein ubiquitination. With respect to regulation, the E3 ubiquitin-protein ligase activity is stimulated by PEX12. In terms of biological role, E3 ubiquitin-protein ligase component of the peroxisomal translocation complex. The two types of peroxisomal matrix targeting signals, PTS1 and PTS2, are first recognized in the cytosol by their receptors PEX5 and PEX7, respectively, which then carry the cargo to the peroxisomal membrane. The peroxisomal targeting signal (PTS) receptor-cargo complexes interact with peroxisomal membrane protein (PMP) components of the docking complex. They have then additional downstream interactions with the translocation complex, leading to the transport of fully folded and oligomerized cargo into the peroxisome matrix. The peroxisomal translocation complex forms the retrotranslocation channel with each subunit contributing transmembrane segments that coassemble into an open channel that specifically allows the passage of PEX5 and PEX20 through the peroxisomal membrane. Specifically catalyzes monoubiquitination of PEX5 and/or PEX20 at 'Cys-6' and 'Cys-8', respectively, a modification that acts as a signal for PEX5 or PEX20 export from peroxisomes to the cytosol, thereby promoting PEX5 and PEX20 recycling. This chain is Peroxisome biogenesis factor 10, found in Komagataella pastoris (Yeast).